The sequence spans 232 residues: Caffeoyl-CoA O-methyltransferase (232 aa).

Lysine 6 contributes to the substrate binding site. Residues threonine 48, glutamate 70, 72–73 (GV), serine 78, aspartate 96, and alanine 125 each bind S-adenosyl-L-methionine. A substrate-binding site is contributed by aspartate 148. Residue aspartate 148 coordinates a divalent metal cation. Aspartate 150 contacts S-adenosyl-L-methionine. Residues aspartate 174 and asparagine 175 each coordinate a divalent metal cation. Asparagine 179 contributes to the substrate binding site.

It belongs to the class I-like SAM-binding methyltransferase superfamily. Cation-dependent O-methyltransferase family. CCoAMT subfamily. Requires a divalent metal cation as cofactor.

It carries out the reaction (E)-caffeoyl-CoA + S-adenosyl-L-methionine = (E)-feruloyl-CoA + S-adenosyl-L-homocysteine + H(+). The protein operates within aromatic compound metabolism; phenylpropanoid biosynthesis. In terms of biological role, methylates caffeoyl-CoA to feruloyl-CoA and 5-hydroxyferuloyl-CoA to sinapoyl-CoA. Plays a role in the synthesis of feruloylated polysaccharides. Involved in the reinforcement of the plant cell wall. Also involved in the responding to wounding or pathogen challenge by the increased formation of cell wall-bound ferulic acid polymers. In Citrus natsudaidai (Natsudaidai orange), this protein is Caffeoyl-CoA O-methyltransferase.